A 453-amino-acid chain; its full sequence is Venom prothrombin activator notecarin-D2 (453 aa).

A signal peptide spans 1–20 (MAPQLLLCLILTFLWSLPEA). A propeptide spanning residues 21-40 (ESNVFLKSKVANRFLQRTKR) is cleaved from the precursor. In terms of domain architecture, Gla spans 41 to 86 (SNSLFEEIRPGNIERECIEEKCSKEEAREVFEDNEKTETFWNVYVD). 4-carboxyglutamate is present on residues Glu46, Glu47, Glu54, Glu56, Glu59, Glu60, Glu65, Glu66, Glu69, Glu72, and Glu75. A disulfide bridge connects residues Cys57 and Cys62. The 37-residue stretch at 86 to 122 (DGDQCSSNPCHYRGTCKDGIGSYTCTCLPNYEGKNCE) folds into the EGF-like 1; calcium-binding domain. 11 cysteine pairs are disulfide-bonded: Cys90–Cys101, Cys95–Cys110, Cys112–Cys121, Cys129–Cys140, Cys136–Cys149, Cys151–Cys164, Cys172–Cys326, Cys216–Cys221, Cys236–Cys252, Cys374–Cys388, and Cys399–Cys427. The O-linked (Hex...) serine glycan is linked to Ser92. In terms of domain architecture, EGF-like 2 spans 129-164 (CRAFNGNCWHFCKRVQSETQCSCAESYLLGVDGHSC). A propeptide spans 182–209 (REASLPDFVQSQKATVLKKSDNPSPDIR) (activation peptide). Residues 210 to 451 (IVNGMDCKLG…FIPWIKKIMS (242 aa)) form the Peptidase S1 domain. His251 functions as the Charge relay system in the catalytic mechanism. An N-linked (GlcNAc...) asparagine glycan is attached at Asn254. The active-site Charge relay system is Asp306. Ser403 serves as the catalytic Charge relay system.

The protein belongs to the peptidase S1 family. Snake venom subfamily. In terms of assembly, heterodimer of a light chain and a heavy chain; disulfide-linked. Post-translationally, gamma-carboxyglutamate residues are formed by vitamin K dependent carboxylation. These residues are essential for the binding of calcium. In terms of tissue distribution, expressed by the venom gland.

The protein resides in the secreted. It carries out the reaction Selective cleavage of Arg-|-Thr and then Arg-|-Ile bonds in prothrombin to form thrombin.. In terms of biological role, snake prothrombin activator that attacks the hemostatic system of prey. This protein is functionally similar to blood coagulation factor Xa. The sequence is that of Venom prothrombin activator notecarin-D2 from Notechis scutatus scutatus (Mainland tiger snake).